The following is a 446-amino-acid chain: AP-2 complex subunit mu (446 aa).

Phosphoserine occurs at positions 145, 151, and 152. Threonine 157 carries the phosphothreonine modification. Positions 177-445 (KNSIYIDIVE…STRAGTCEIR (269 aa)) constitute an MHD domain.

The protein belongs to the adaptor complexes medium subunit family. Adaptor protein complex 2 (AP-2) is a heterotetramer composed of two large adaptins (alpha-type subunit apl3 and beta-type subunit apl1), a medium chain (mu-type subunit apm4) and a small adaptin (sigma-type subunit aps2).

Its subcellular location is the cell membrane. The protein localises to the membrane. The protein resides in the coated pit. Functionally, component of the adaptor complexes which link clathrin to receptors in coated vesicles. Clathrin-associated protein complexes are believed to interact with the cytoplasmic tails of membrane proteins, leading to their selection and concentration. AP50 is a subunit of the plasma membrane adaptor (Potential). The polypeptide is AP-2 complex subunit mu (apm4) (Schizosaccharomyces pombe (strain 972 / ATCC 24843) (Fission yeast)).